Here is a 118-residue protein sequence, read N- to C-terminus: Large ribosomal subunit protein uL18 (118 aa).

The segment at 1–24 (MISKPDKNKIRQKRHRRVRGKLSG) is disordered. Positions 10–20 (IRQKRHRRVRG) are enriched in basic residues.

It belongs to the universal ribosomal protein uL18 family. As to quaternary structure, part of the 50S ribosomal subunit; part of the 5S rRNA/L5/L18/L25 subcomplex. Contacts the 5S and 23S rRNAs.

This is one of the proteins that bind and probably mediate the attachment of the 5S RNA into the large ribosomal subunit, where it forms part of the central protuberance. The chain is Large ribosomal subunit protein uL18 from Streptococcus mutans serotype c (strain ATCC 700610 / UA159).